Here is a 1377-residue protein sequence, read N- to C-terminus: DNA-directed RNA polymerase subunit beta' (1377 aa).

The Zn(2+) site is built by Cys60, Cys62, Cys75, and Cys78. Asp449, Asp451, and Asp453 together coordinate Mg(2+). Zn(2+) is bound by residues Cys777, Cys851, Cys858, and Cys861.

Belongs to the RNA polymerase beta' chain family. In terms of assembly, the RNAP catalytic core consists of 2 alpha, 1 beta, 1 beta' and 1 omega subunit. When a sigma factor is associated with the core the holoenzyme is formed, which can initiate transcription. Mg(2+) is required as a cofactor. It depends on Zn(2+) as a cofactor.

The enzyme catalyses RNA(n) + a ribonucleoside 5'-triphosphate = RNA(n+1) + diphosphate. Functionally, DNA-dependent RNA polymerase catalyzes the transcription of DNA into RNA using the four ribonucleoside triphosphates as substrates. This Borreliella burgdorferi (strain ATCC 35210 / DSM 4680 / CIP 102532 / B31) (Borrelia burgdorferi) protein is DNA-directed RNA polymerase subunit beta'.